Consider the following 61-residue polypeptide: Sec-independent protein translocase protein TatA (61 aa).

The helical transmembrane segment at 1 to 21 (MFGIGMPELIVILVIVLVVFG) threads the bilayer.

This sequence belongs to the TatA/E family. As to quaternary structure, the Tat system comprises two distinct complexes: a TatABC complex, containing multiple copies of TatA, TatB and TatC subunits, and a separate TatA complex, containing only TatA subunits. Substrates initially bind to the TatABC complex, which probably triggers association of the separate TatA complex to form the active translocon.

The protein resides in the cell inner membrane. Its function is as follows. Part of the twin-arginine translocation (Tat) system that transports large folded proteins containing a characteristic twin-arginine motif in their signal peptide across membranes. TatA could form the protein-conducting channel of the Tat system. The protein is Sec-independent protein translocase protein TatA of Geobacter metallireducens (strain ATCC 53774 / DSM 7210 / GS-15).